A 356-amino-acid chain; its full sequence is Tyrosine recombinase XerS (356 aa).

The region spanning 16–121 (TMPWYILEYY…ALSSLYKYLT (106 aa)) is the Core-binding (CB) domain. The Tyr recombinase domain occupies 169–354 (EFLQYIDTEY…VNDEQKNALD (186 aa)). Active-site residues include arginine 210, lysine 234, histidine 306, arginine 309, and histidine 332. The active-site O-(3'-phospho-DNA)-tyrosine intermediate is tyrosine 341.

It belongs to the 'phage' integrase family. XerS subfamily.

It localises to the cytoplasm. Its activity is regulated as follows. FtsK is required for recombination. Its function is as follows. Site-specific tyrosine recombinase, which acts by catalyzing the cutting and rejoining of the recombining DNA molecules. Essential to convert dimers of the bacterial chromosome into monomers to permit their segregation at cell division. In Streptococcus sanguinis (strain SK36), this protein is Tyrosine recombinase XerS.